The following is a 418-amino-acid chain: Serine protease inhibitor A3N (418 aa).

The first 29 residues, 1 to 29 (MTRLVTLELLMAGIGSALLCFPDCILGED), serve as a signal peptide directing secretion. At serine 93 the chain carries Phosphoserine. N-linked (GlcNAc...) asparagine glycosylation is found at asparagine 104, asparagine 258, and asparagine 269. The tract at residues 367-394 (GTEAAAATGVKFVPMSAKLDPLIIAFDR) is RCL.

The protein belongs to the serpin family. N-glycosylated. In terms of tissue distribution, liver.

Its subcellular location is the secreted. The polypeptide is Serine protease inhibitor A3N (Serpina3n) (Rattus norvegicus (Rat)).